The sequence spans 117 residues: Immunoglobulin lambda variable 1-51 (117 aa).

The signal sequence occupies residues 1-19; it reads MTCSPLLLTLLIHCTGSWA. Residue Gln20 is modified to Pyrrolidone carboxylic acid. The framework-1 stretch occupies residues 20-44; that stretch reads QSVLTQPPSVSAAPGQKVTISCSGS. The Ig-like domain maps to 20 to 117; it reads QSVLTQPPSV…CGTWDSSLSA (98 aa). Cys41 and Cys108 are disulfide-bonded. Residues 45 to 52 form a complementarity-determining-1 region; the sequence is SSNIGNNY. Residues 53–69 are framework-2; the sequence is VSWYQQLPGTAPKLLIY. Residues 70 to 72 form a complementarity-determining-2 region; the sequence is DNN. Residues 73–108 are framework-3; that stretch reads KRPSGIPDRFSGSKSGTSATLGITGLQTGDEADYYC. The interval 109–117 is complementarity-determining-3; the sequence is GTWDSSLSA.

In terms of assembly, immunoglobulins are composed of two identical heavy chains and two identical light chains; disulfide-linked.

The protein resides in the secreted. Its subcellular location is the cell membrane. Functionally, v region of the variable domain of immunoglobulin light chains that participates in the antigen recognition. Immunoglobulins, also known as antibodies, are membrane-bound or secreted glycoproteins produced by B lymphocytes. In the recognition phase of humoral immunity, the membrane-bound immunoglobulins serve as receptors which, upon binding of a specific antigen, trigger the clonal expansion and differentiation of B lymphocytes into immunoglobulins-secreting plasma cells. Secreted immunoglobulins mediate the effector phase of humoral immunity, which results in the elimination of bound antigens. The antigen binding site is formed by the variable domain of one heavy chain, together with that of its associated light chain. Thus, each immunoglobulin has two antigen binding sites with remarkable affinity for a particular antigen. The variable domains are assembled by a process called V-(D)-J rearrangement and can then be subjected to somatic hypermutations which, after exposure to antigen and selection, allow affinity maturation for a particular antigen. In Homo sapiens (Human), this protein is Immunoglobulin lambda variable 1-51.